Here is a 367-residue protein sequence, read N- to C-terminus: tRNA pseudouridine synthase D (367 aa).

D78 acts as the Nucleophile in catalysis. One can recognise a TRUD domain in the interval 153–300; it reads GVPNYFGEQR…KQERRRIRLT (148 aa).

Belongs to the pseudouridine synthase TruD family.

It catalyses the reaction uridine(13) in tRNA = pseudouridine(13) in tRNA. Its function is as follows. Responsible for synthesis of pseudouridine from uracil-13 in transfer RNAs. This chain is tRNA pseudouridine synthase D, found in Colwellia psychrerythraea (strain 34H / ATCC BAA-681) (Vibrio psychroerythus).